Here is a 1960-residue protein sequence, read N- to C-terminus: Intraflagellar transport protein 172 (1960 aa).

WD repeat units follow at residues 63-103 (SNKD…TDKK) and 328-367 (GFLPQITSIAWRPDVSVLTVGTSLGSVDNFTPTIGSYRYC). TPR repeat units lie at residues 1064 to 1098 (KADQPLLGLSAFICAGKFDEAIQFIRSNLPRQSYR), 1362 to 1395 (CDLFWRRGRKLEIEGRLKEAEEFYAKAGKHQEIV), and 1397 to 1428 (MYLDTGKFEDAQQAAMEMTSNFERERAMRSIR).

This sequence belongs to the IFT172 family.

It localises to the cell projection. Its subcellular location is the cilium. The protein localises to the flagellum. The protein resides in the cytoplasm. It is found in the cytoskeleton. It localises to the flagellum axoneme. Its subcellular location is the flagellum basal body. Functionally, component of the intraflagellar transport complex B (IFT-B) involved in flagellar assembly. This chain is Intraflagellar transport protein 172, found in Giardia intestinalis (strain ATCC 50803 / WB clone C6) (Giardia lamblia).